Consider the following 106-residue polypeptide: Small ribosomal subunit protein uS10 (106 aa).

The protein belongs to the universal ribosomal protein uS10 family. Part of the 30S ribosomal subunit.

Involved in the binding of tRNA to the ribosomes. The sequence is that of Small ribosomal subunit protein uS10 from Prochlorococcus marinus subsp. pastoris (strain CCMP1986 / NIES-2087 / MED4).